We begin with the raw amino-acid sequence, 172 residues long: MKLVSNKILFLATMVLASSSAFALKDDVNQPINIVSDNQSLDMEKSVVTFTDNVVITQGSIVIKANKVVITRPAEKSGKKETVEAFGTPVTFHQQLDNGKPVDGKANKVHYDLGNEFLTLTNNAELKQLDSKINGSVITYDVKKQQLKANGNGKSRVTTVLIPSQLQQAKGK.

An N-terminal signal peptide occupies residues 1 to 23; it reads MKLVSNKILFLATMVLASSSAFA.

It belongs to the LptA family. Component of the lipopolysaccharide transport and assembly complex.

It localises to the periplasm. Functionally, involved in the assembly of lipopolysaccharide (LPS). Required for the translocation of LPS from the inner membrane to the outer membrane. May form a bridge between the inner membrane and the outer membrane, via interactions with LptC and LptD, thereby facilitating LPS transfer across the periplasm. This chain is Lipopolysaccharide export system protein LptA, found in Haemophilus influenzae (strain ATCC 51907 / DSM 11121 / KW20 / Rd).